Here is a 180-residue protein sequence, read N- to C-terminus: Peptide deformylase (180 aa).

Fe cation contacts are provided by Cys96 and His138. The active site involves Glu139. A Fe cation-binding site is contributed by His142.

The protein belongs to the polypeptide deformylase family. Fe(2+) is required as a cofactor.

The catalysed reaction is N-terminal N-formyl-L-methionyl-[peptide] + H2O = N-terminal L-methionyl-[peptide] + formate. Functionally, removes the formyl group from the N-terminal Met of newly synthesized proteins. Requires at least a dipeptide for an efficient rate of reaction. N-terminal L-methionine is a prerequisite for activity but the enzyme has broad specificity at other positions. The protein is Peptide deformylase of Rhodopseudomonas palustris (strain BisA53).